We begin with the raw amino-acid sequence, 296 residues long: PYK10-binding protein 2 (296 aa).

A disordered region spans residues 1–20 (MAQKVEAKGGKGGNQWDDGS). N-acetylalanine is present on alanine 2. 2 consecutive Jacalin-type lectin domains span residues 2–142 (AQKV…YFAP) and 150–293 (AKPL…HVRP).

The protein belongs to the jacalin lectin family. As to quaternary structure, component of the PYK10 complex, at least composed of PYK10/BGLU23, BGLU21, BGLU22, JAL22, JAL23, PBP1/JAL30, PBP2/JAL31, JAL32, JAL33, JAL34, JAL35, GLL22 and GLL23.

Its function is as follows. Polymerizer-type lectin that may facilitate the correct polymerization of BGLU23/PYK10 upon tissue damage. Activates BGLU21, BGLU22 and BGLU23. This is PYK10-binding protein 2 (PBP2) from Arabidopsis thaliana (Mouse-ear cress).